The chain runs to 172 residues: Large ribosomal subunit protein uL10 (172 aa).

The protein belongs to the universal ribosomal protein uL10 family. As to quaternary structure, part of the ribosomal stalk of the 50S ribosomal subunit. The N-terminus interacts with L11 and the large rRNA to form the base of the stalk. The C-terminus forms an elongated spine to which L12 dimers bind in a sequential fashion forming a multimeric L10(L12)X complex.

Functionally, forms part of the ribosomal stalk, playing a central role in the interaction of the ribosome with GTP-bound translation factors. This is Large ribosomal subunit protein uL10 from Rhodospirillum centenum (strain ATCC 51521 / SW).